Reading from the N-terminus, the 201-residue chain is Lipoprotein signal peptidase (201 aa).

Transmembrane regions (helical) follow at residues 33–53 (LLLS…VLAV), 86–106 (GYTW…FWMG), and 110–130 (VSSW…GNLV). Active-site residues include aspartate 146 and aspartate 160. The helical transmembrane segment at 158-178 (VADPSVVVGAILLVVLSIFGF) threads the bilayer.

This sequence belongs to the peptidase A8 family.

It is found in the cell membrane. It carries out the reaction Release of signal peptides from bacterial membrane prolipoproteins. Hydrolyzes -Xaa-Yaa-Zaa-|-(S,diacylglyceryl)Cys-, in which Xaa is hydrophobic (preferably Leu), and Yaa (Ala or Ser) and Zaa (Gly or Ala) have small, neutral side chains.. It functions in the pathway protein modification; lipoprotein biosynthesis (signal peptide cleavage). In terms of biological role, this protein specifically catalyzes the removal of signal peptides from prolipoproteins. The chain is Lipoprotein signal peptidase from Mycobacterium leprae (strain Br4923).